We begin with the raw amino-acid sequence, 1687 residues long: Brefeldin A-inhibited guanine nucleotide-exchange protein 1 (1687 aa).

Residues 494–529 (SLENEAPANNHSNSNEEDGTTIDHDFHPDLNPESSD) form a disordered region. A compositionally biased stretch (basic and acidic residues) spans 514-523 (TIDHDFHPDL). Residues 532 to 719 (TLEQRRAYKI…GALYDQVVIN (188 aa)) form the SEC7 domain. Glu-634 is a catalytic residue. The segment at 1229-1248 (KGRSSSPSTPVTDDHSPSTQ) is disordered. Over residues 1232–1248 (SSSPSTPVTDDHSPSTQ) the composition is skewed to polar residues.

Homodimer.

It localises to the cytoplasm. The protein localises to the cytosol. Its subcellular location is the membrane. Its activity is regulated as follows. Inhibited by brefeldin A. Its function is as follows. Activates the ARF proteins by exchanging bound GDP for free GTP. Plays a role in vesicular protein sorting. This chain is Brefeldin A-inhibited guanine nucleotide-exchange protein 1 (BIG1), found in Arabidopsis thaliana (Mouse-ear cress).